A 399-amino-acid polypeptide reads, in one-letter code: Mycinamicin VI 2''-O-methyltransferase (399 aa).

S-adenosyl-L-methionine-binding positions include T173, 202–208 (EIGVGGY), S217, D234, 252–253 (DQ), and D275. D275 contacts Mg(2+). The active-site Proton acceptor is the H278. Residues E303 and D304 each contribute to the Mg(2+) site.

The protein belongs to the methyltransferase OleY/MycE family. As to quaternary structure, homotetramer. It depends on Mg(2+) as a cofactor.

It catalyses the reaction mycinamicin VI + S-adenosyl-L-methionine = mycinamicin III + S-adenosyl-L-homocysteine + H(+). It functions in the pathway antibiotic biosynthesis; mycinamicin biosynthesis. O-methyltransferase that catalyzes the conversion of mycinamicin VI to mycinamicin III in the biosynthesis of mycinamicin, a 16-membered macrolide antibiotic. In Micromonospora griseorubida, this protein is Mycinamicin VI 2''-O-methyltransferase (mycE).